A 588-amino-acid chain; its full sequence is MKLEFTEKNYNSFVLQNLNKQRKRKEYWDIALTVDHHVFFAHRNVLAAVSPLVKNLISNHDMKTTDELFITIDPNYLSPTTVDQLLDYFYSGKVVISEQNVEELLRGAQYFNTPRLRIHCNDFLIKSIRRANCLRYLFLAELFELKEVSDLAYSGIRDNFHYWASPEGCVHFMRCPPVIFGRLLRDENLHVLNEDQALNALINWVCFRKDEREKYFKKFFNYINLNAVSNKTLMYASNKLMGMENSSAHSTLIESVLVDRKQERPTSLLSYQRKGALLDSVVILGGQKAHGKFNDGVFAYIIQENLWLKLSEMPYRAAALSATSAGRYIYISGGTTEQISGLKTAWRYDMDDNSWTKLPDLPIGLVFHTMVTCGGTVYSVGGSIAPRRYVSNIYRYDERKETWCLAGKMSIPMDGTAVITRGDRNLYIVTGRCLVKGYISRVGVVDCFDTNTGEVVQCITFPIEFNHRPLLSFHQDNILCVYSHRQSVEINLQKVKANKTTTSVPLLPNNCPLDVSHAICSVGDNKVFVCGGVTTTTDVQTKDYTINPNAYLLDQKAGEWKTLAPPPEALDCPACCLAKLPCKILQRI.

Positions 28 to 98 (WDIALTVDHH…FYSGKVVISE (71 aa)) constitute a BTB domain. Residue Ser-149 is modified to Phosphoserine. Kelch repeat units follow at residues 280–327 (SVVI…SAGR), 328–375 (YIYI…TCGG), 377–423 (VYSV…TRGD), 425–475 (NLYI…SFHQ), 476–525 (DNIL…VGDN), and 526–580 (KVFV…LAKL).

Interacts with CYLC1; the interaction may be relevant for proper acrosome attachment to the nuclear envelope. As to expression, expressed in testis and in spermatozoa (at protein level).

Its subcellular location is the cytoplasm. The protein localises to the cytoskeleton. The protein resides in the perinuclear theca. It localises to the calyx. Required for both nuclear and acrosomal shaping during spermiogenesis. This chain is Calicin (CCIN), found in Bos taurus (Bovine).